A 498-amino-acid chain; its full sequence is Diacylglycerol O-acyltransferase 1 (498 aa).

The tract at residues 1-66 (MGDRGGAGSS…AHTRDKDGRT (66 aa)) is disordered. The Cytoplasmic portion of the chain corresponds to 1–92 (MGDRGGAGSS…SLFSSDSGFS (92 aa)). An involved in homomerization region spans residues 1–100 (MGDRGGAGSS…FSNYRGILNW (100 aa)). Ser20 is modified (phosphoserine). Residues 93 to 127 (NYRGILNWCVVMLILSNARLFLENLIKYGILVDPI) traverse the membrane as a helical segment. Over 128 to 139 (QVVSLFLKDPYS) the chain is Lumenal. The extracellular loop 1 (EL1) stretch occupies residues 128–139 (QVVSLFLKDPYS). A helical membrane pass occupies residues 140–165 (WPAPCVIIASNIFVVAAFQIEKRLAV). An MBOAT fold region spans residues 140 to 498 (WPAPCVIIAS…VLNYDAPVGV (359 aa)). Topologically, residues 166–170 (GALTE) are cytoplasmic. A helical transmembrane segment spans residues 171 to 193 (QMGLLLHVVNLATIICFPAAVAL). The Lumenal portion of the chain corresponds to 194–200 (LVESITP). Residues 201-232 (VGSVFALASYSIMFLKLYSYRDVNLWCRQRRV) form a helical membrane-spanning segment. The Cytoplasmic portion of the chain corresponds to 233 to 284 (KAKAVSTGKKVSGAAAQQAVSYPDNLTYRDLYYFIFAPTLCYELNFPRSPRI). An intracellular loop 1 (IL1) region spans residues 235–287 (KAVSTGKKVSGAAAQQAVSYPDNLTYRDLYYFIFAPTLCYELNFPRSPRIRKR). The chain crosses the membrane as a helical span at residues 285-319 (RKRFLLRRVLEMLFFTQLQVGLIQQWMVPTIQNSM). Topologically, residues 320–326 (KPFKDMD) are lumenal. Residues 327–364 (YSRIIERLLKLAVPNHLIWLIFFYWFFHSCLNAVAELL) traverse the membrane as a helical segment. Topologically, residues 365-410 (QFGDREFYRDWWNAESVTYFWQNWNIPVHKWCIRHFYKPMLRHGSS) are cytoplasmic. The interval 365–410 (QFGDREFYRDWWNAESVTYFWQNWNIPVHKWCIRHFYKPMLRHGSS) is intracellular loop 2 (IL2). The FYXDWWN motif signature appears at 371-377 (FYRDWWN). An acyl-CoA is bound by residues 385 to 393 (WQNWNIPVH), Tyr401, and Arg415. The segment at 391–405 (PVHKWCIRHFYKPML) is amphipathic helix (AH). A helical transmembrane segment spans residues 411–431 (KWVARTGVFLTSAFFHEYLVS). His426 is a catalytic residue. Topologically, residues 432–439 (VPLRMFRL) are lumenal. The helical transmembrane segment at 440–458 (WAFTAMMAQVPLAWIVGRF) threads the bilayer. The Cytoplasmic portion of the chain corresponds to 459–460 (FQ). Residues 461–492 (GNYGNAAVWVTLIIGQPVAVLMYVHDYYVLNY) form a helical membrane-spanning segment. Tyr488 contributes to the an acyl-CoA binding site. Residues 493 to 498 (DAPVGV) are Lumenal-facing.

Belongs to the membrane-bound acyltransferase family. Sterol o-acyltransferase subfamily. As to quaternary structure, homodimer or homotetramer; both forms have similar enzymatic activities.

The protein localises to the endoplasmic reticulum membrane. It catalyses the reaction an acyl-CoA + a 1,2-diacyl-sn-glycerol = a triacyl-sn-glycerol + CoA. The catalysed reaction is all-trans-retinol + an acyl-CoA = an all-trans-retinyl ester + CoA. It carries out the reaction 1-octadecanoyl-2-(5Z,8Z,11Z,14Z-eicosatetraenoyl)-sn-glycerol + (9Z)-octadecenoyl-CoA = 1-octadecanoyl-2-(5Z,8Z,11Z,14Z)-eicosatetraenoyl-3-(9Z)-octadecenoyl-sn-glycerol + CoA. The enzyme catalyses hexadecane-1,2-diol + 2 hexadecanoyl-CoA = 1,2-O,O-dihexadecanoyl-1,2-hexadecanediol + 2 CoA. It catalyses the reaction hexadecane-1,2-diol + hexadecanoyl-CoA = 2-hydroxyhexadecyl hexadecanoate + CoA. The catalysed reaction is 2-(9Z-octadecenoyl)-glycerol + hexadecanoyl-CoA = 1-hexadecanoyl-2-(9Z-octadecenoyl)-sn-glycerol + CoA. It carries out the reaction 1,2-di-(9Z-octadecenoyl)-sn-glycerol + hexadecanoyl-CoA = 1,2-di-(9Z)-octadecenoyl-3-hexadecanoyl-sn-glycerol + CoA. The enzyme catalyses hexadecan-1-ol + hexadecanoyl-CoA = hexadecanyl hexadecanoate + CoA. It catalyses the reaction all-trans-retinol + hexadecanoyl-CoA = all-trans-retinyl hexadecanoate + CoA. The catalysed reaction is 13-cis-retinol + hexadecanoyl-CoA = 13-cis-retinyl hexadecanoate + CoA. It carries out the reaction 1,2-di-(9Z-octadecenoyl)-sn-glycerol + (9Z)-octadecenoyl-CoA = 1,2,3-tri-(9Z-octadecenoyl)-glycerol + CoA. The enzyme catalyses 1,3-di-(9Z-octadecenoyl)-glycerol + (9Z)-octadecenoyl-CoA = 1,2,3-tri-(9Z-octadecenoyl)-glycerol + CoA. It catalyses the reaction 2,3-di-(9Z)-octadecenoyl-sn-glycerol + (9Z)-octadecenoyl-CoA = 1,2,3-tri-(9Z-octadecenoyl)-glycerol + CoA. The catalysed reaction is 1-O-(9Z-octadecenyl)-glycerol + (9Z)-octadecenoyl-CoA = 1-O-(9Z-octadecyl)-3-(9Z-octadecenoyl)-glycerol + CoA. It carries out the reaction 1-(9Z-octadecenoyl)-glycerol + (9Z)-octadecenoyl-CoA = 1,2-di-(9Z-octadecenoyl)-glycerol + CoA. The enzyme catalyses 2-(9Z-octadecenoyl)-glycerol + (9Z)-octadecenoyl-CoA = 1,2-di-(9Z-octadecenoyl)-sn-glycerol + CoA. It catalyses the reaction 1-O-(9Z-octadecyl)-3-(9Z-octadecenoyl)-glycerol + (9Z)-octadecenoyl-CoA = 1-O-(9Z-octadecenyl)-2,3-di-(9Z-octadecenoyl)glycerol + CoA. The catalysed reaction is 1,2-di-(9Z-octadecenoyl)-glycerol + (9Z)-octadecenoate + H(+) = 1,2,3-tri-(9Z-octadecenoyl)-glycerol + H2O. It participates in lipid metabolism; glycerolipid metabolism. In terms of biological role, catalyzes the terminal and only committed step in triacylglycerol synthesis by using diacylglycerol and fatty acyl CoA as substrates. Highly expressed in epithelial cells of the small intestine and its activity is essential for the absorption of dietary fats. In liver, plays a role in esterifying exogenous fatty acids to glycerol, and is required to synthesize fat for storage. Also present in female mammary glands, where it produces fat in the milk. May be involved in VLDL (very low density lipoprotein) assembly. In contrast to DGAT2 it is not essential for survival. Functions as the major acyl-CoA retinol acyltransferase (ARAT) in the skin, where it acts to maintain retinoid homeostasis and prevent retinoid toxicity leading to skin and hair disorders. Exhibits additional acyltransferase activities, includin acyl CoA:monoacylglycerol acyltransferase (MGAT), wax monoester and wax diester synthases. Also able to use 1-monoalkylglycerol (1-MAkG) as an acyl acceptor for the synthesis of monoalkyl-monoacylglycerol (MAMAG). The polypeptide is Diacylglycerol O-acyltransferase 1 (Mus musculus (Mouse)).